The following is a 410-amino-acid chain: LL-diaminopimelate aminotransferase (410 aa).

The substrate site is built by Tyr-15 and Gly-42. Pyridoxal 5'-phosphate-binding positions include Tyr-72, 108–109, Tyr-132, Asn-188, Tyr-219, and 247–249; these read AK and SFS. Positions 109, 132, and 188 each coordinate substrate. N6-(pyridoxal phosphate)lysine is present on Lys-250. Residues Arg-258 and Asn-293 each coordinate pyridoxal 5'-phosphate. 2 residues coordinate substrate: Asn-293 and Arg-389.

It belongs to the class-I pyridoxal-phosphate-dependent aminotransferase family. LL-diaminopimelate aminotransferase subfamily. Homodimer. Requires pyridoxal 5'-phosphate as cofactor.

The enzyme catalyses (2S,6S)-2,6-diaminopimelate + 2-oxoglutarate = (S)-2,3,4,5-tetrahydrodipicolinate + L-glutamate + H2O + H(+). It functions in the pathway amino-acid biosynthesis; L-lysine biosynthesis via DAP pathway; LL-2,6-diaminopimelate from (S)-tetrahydrodipicolinate (aminotransferase route): step 1/1. Involved in the synthesis of meso-diaminopimelate (m-DAP or DL-DAP), required for both lysine and peptidoglycan biosynthesis. Catalyzes the direct conversion of tetrahydrodipicolinate to LL-diaminopimelate. Can also use m-DAP instead of LL-DAP as the amino-group donor. This Bacteroides fragilis (strain ATCC 25285 / DSM 2151 / CCUG 4856 / JCM 11019 / LMG 10263 / NCTC 9343 / Onslow / VPI 2553 / EN-2) protein is LL-diaminopimelate aminotransferase.